Consider the following 114-residue polypeptide: Phosphoribosyl-ATP pyrophosphatase (114 aa).

It belongs to the PRA-PH family.

The protein resides in the cytoplasm. The catalysed reaction is 1-(5-phospho-beta-D-ribosyl)-ATP + H2O = 1-(5-phospho-beta-D-ribosyl)-5'-AMP + diphosphate + H(+). Its pathway is amino-acid biosynthesis; L-histidine biosynthesis; L-histidine from 5-phospho-alpha-D-ribose 1-diphosphate: step 2/9. This is Phosphoribosyl-ATP pyrophosphatase from Leuconostoc mesenteroides subsp. mesenteroides (strain ATCC 8293 / DSM 20343 / BCRC 11652 / CCM 1803 / JCM 6124 / NCDO 523 / NBRC 100496 / NCIMB 8023 / NCTC 12954 / NRRL B-1118 / 37Y).